The following is a 487-amino-acid chain: N-succinylglutamate 5-semialdehyde dehydrogenase (487 aa).

NAD(+) is bound at residue 221–226; the sequence is GSSRTG. Active-site residues include glutamate 244 and cysteine 278.

This sequence belongs to the aldehyde dehydrogenase family. AstD subfamily.

It carries out the reaction N-succinyl-L-glutamate 5-semialdehyde + NAD(+) + H2O = N-succinyl-L-glutamate + NADH + 2 H(+). It functions in the pathway amino-acid degradation; L-arginine degradation via AST pathway; L-glutamate and succinate from L-arginine: step 4/5. In terms of biological role, catalyzes the NAD-dependent reduction of succinylglutamate semialdehyde into succinylglutamate. This Pseudomonas putida (strain ATCC 700007 / DSM 6899 / JCM 31910 / BCRC 17059 / LMG 24140 / F1) protein is N-succinylglutamate 5-semialdehyde dehydrogenase.